Here is a 76-residue protein sequence, read N- to C-terminus: Serine palmitoyltransferase small subunit B (76 aa).

Residues 1–11 are Cytoplasmic-facing; the sequence is MDFKRVKDYLS. The helical transmembrane segment at 12 to 29 threads the bilayer; it reads WLYYQYQIISCCAVLEPW. Over 30-36 the chain is Lumenal; sequence EQSMFNT. A helical membrane pass occupies residues 37-57; sequence IILTIFAMVVYTAYVFIPIHI. Residues 58–76 are Cytoplasmic-facing; that stretch reads RLAWEFFSKMCGYHSTISN.

Belongs to the SPTSS family. SPTSSB subfamily. As to quaternary structure, component of the serine palmitoyltransferase (SPT) complex, which is composed of SPTLC1, SPTLC2 or SPTLC3 and SPTSSA or SPTSSB. The heterodimer consisting of SPTLC1 and SPTLC2/SPTLC3 forms the catalytic core of the enzyme, while SPTSSA or SPTSSB subunits determine substrate specificity. SPT also interacts with ORMDL proteins, especially ORMDL3, which negatively regulate SPT activity in the presence of ceramides.

The protein localises to the endoplasmic reticulum membrane. Its pathway is lipid metabolism; sphingolipid metabolism. In terms of biological role, component of the serine palmitoyltransferase multisubunit enzyme (SPT) that catalyzes the initial and rate-limiting step in sphingolipid biosynthesis by condensing L-serine and activated acyl-CoA (most commonly palmitoyl-CoA) to form long-chain bases. The SPT complex is composed of SPTLC1, SPTLC2 or SPTLC3 and SPTSSA or SPTSSB. Within this complex, the heterodimer consisting of SPTLC1 and SPTLC2/SPTLC3 forms the catalytic core. Within the SPT complex, SPTSSB stimulates the catalytic activity and plays a role in substrate specificity. SPT complexes with this subunit showing a preference for longer acyl-CoAs. The SPTLC1-SPTLC2-SPTSSB complex shows a strong preference for C18-CoA substrate, while the SPTLC1-SPTLC3-SPTSSB isozyme displays an ability to use a broader range of acyl-CoAs, without apparent preference. In Bos taurus (Bovine), this protein is Serine palmitoyltransferase small subunit B (SPTSSB).